The chain runs to 279 residues: NADPH-dependent 7-cyano-7-deazaguanine reductase (279 aa).

86–88 (IES) contributes to the substrate binding site. 88-89 (SK) is an NADPH binding site. C186 functions as the Thioimide intermediate in the catalytic mechanism. D193 functions as the Proton donor in the catalytic mechanism. Position 225 to 226 (225 to 226 (HE)) interacts with substrate. 254–255 (RG) lines the NADPH pocket.

The protein belongs to the GTP cyclohydrolase I family. QueF type 2 subfamily. As to quaternary structure, homodimer.

It localises to the cytoplasm. The enzyme catalyses 7-aminomethyl-7-carbaguanine + 2 NADP(+) = 7-cyano-7-deazaguanine + 2 NADPH + 3 H(+). Its pathway is tRNA modification; tRNA-queuosine biosynthesis. Functionally, catalyzes the NADPH-dependent reduction of 7-cyano-7-deazaguanine (preQ0) to 7-aminomethyl-7-deazaguanine (preQ1). The sequence is that of NADPH-dependent 7-cyano-7-deazaguanine reductase from Chromobacterium violaceum (strain ATCC 12472 / DSM 30191 / JCM 1249 / CCUG 213 / NBRC 12614 / NCIMB 9131 / NCTC 9757 / MK).